Here is a 78-residue protein sequence, read N- to C-terminus: Dermaseptin-B1 (78 aa).

Positions 1–22 (MDILKKSLFLVLFLGLVSLSIC) are cleaved as a signal peptide. Residues 23–42 (EEEKRENEDEEKQDDEQSEM) constitute a propeptide that is removed on maturation. Glutamine 75 carries the glutamine amide modification. A propeptide spanning residues 76–78 (GEQ) is cleaved from the precursor.

Belongs to the frog skin active peptide (FSAP) family. Dermaseptin subfamily. In terms of tissue distribution, expressed by the skin glands.

The protein resides in the secreted. Its function is as follows. Possesses a potent antimicrobial activity against bacteria, fungi and protozoa. Probably acts by disturbing membrane functions with its amphipathic structure. This Phyllomedusa bicolor (Two-colored leaf frog) protein is Dermaseptin-B1.